The following is a 644-amino-acid chain: Far upstream element-binding protein 1 (644 aa).

Disordered stretches follow at residues 1-31 (MADY…NDAF) and 44-94 (KIGG…PMHQ). Alanine 2 carries the post-translational modification N-acetylalanine. Residues 14-27 (SAGGGGGGGGGGGV) show a composition bias toward gly residues. Serine 52 and serine 55 each carry phosphoserine. Positions 65 to 77 (RPLEDGDQPDAKK) are enriched in basic and acidic residues. The span at 81–94 (QNDSFGTQLPPMHQ) shows a compositional bias: polar residues. KH domains follow at residues 100–164 (VMTE…KRLL), 185–251 (NAVQ…KEMV), and 275–339 (NEGI…AEII). At serine 140 the chain carries Phosphoserine. Threonine 153 carries the post-translational modification Phosphothreonine. Arginine 321, arginine 359, arginine 361, and arginine 363 each carry omega-N-methylarginine. Residues 346–365 (VQAGNPGGPGPGGRGRGRGQ) form a disordered region. A compositionally biased stretch (gly residues) spans 350–365 (NPGGPGPGGRGRGRGQ). In terms of domain architecture, KH 4 spans 376–443 (LQEFNFIVPT…QQIDYARQLI (68 aa)). Threonine 432 bears the Phosphothreonine mark. Disordered regions lie at residues 447-532 (IGGP…GTDP) and 548-580 (QAQP…AGQV). Residues 468 to 505 (PHGPPGPPGPGTPMGPYNPAPYNPGPPGPAPHGPPAPY) are compositionally biased toward pro residues. The segment covering 556–573 (PAGAPTTTQTNGQGDQQN) has biased composition (low complexity). Serine 630 is modified (phosphoserine).

In terms of assembly, found in a complex with PUF60 and far upstream element (FUSE) DNA segment. Interacts with PUF60 and JTV1. Post-translationally, ubiquitinated. This targets the protein for proteasome-mediated degradation.

Its subcellular location is the nucleus. Functionally, regulates MYC expression by binding to a single-stranded far-upstream element (FUSE) upstream of the MYC promoter. May act both as activator and repressor of transcription. This chain is Far upstream element-binding protein 1 (FUBP1), found in Homo sapiens (Human).